A 195-amino-acid polypeptide reads, in one-letter code: Putative L(+)-tartrate dehydratase subunit beta (195 aa).

His36 is an active-site residue. Lys104 provides a ligand contact to substrate.

Belongs to the class-I fumarase family. In terms of assembly, heterotetramer of two alpha and two beta subunits.

The enzyme catalyses (2R,3R)-tartrate = oxaloacetate + H2O. In Methanocaldococcus jannaschii (strain ATCC 43067 / DSM 2661 / JAL-1 / JCM 10045 / NBRC 100440) (Methanococcus jannaschii), this protein is Putative L(+)-tartrate dehydratase subunit beta.